Reading from the N-terminus, the 389-residue chain is MVSVSEIRKAQRAEGPATILAIGTANPANCVEQSTYPDFYFRITNSEHKIELKQKFQRMCDKSMINRRYMYLTEEILKENPSVCEYMAPSLDARQDMVVVEVPRLGKEAAVKAIKEWGQPKSKITHLIFCTTSGVDMPGADYQLTKLLGLRPYVKRYMMYQQGCFAGGTVLRLAKDLAENNKGARVLVVCSEVTAVTFRGPSDTHLDSLVGQALFGDGAAALIVGSDPLPEIEKPIFEMVWTAQTIAPDSEGAIDGHLREAGLTFHLLKDVPAIVSKNIDKALVEAFQPLGISDYNSIFWIAHPGGPAILDQVEQKLALKPEKMKATREVLSEYGNMSSACVLFILDEMRRKSIQNGLKTTGEGLEWGVLFGFGPGLTIETVVLHSVVI.

Cys-164 is an active-site residue.

It belongs to the thiolase-like superfamily. Chalcone/stilbene synthases family.

It catalyses the reaction (E)-4-coumaroyl-CoA + 3 malonyl-CoA + 3 H(+) = 2',4,4',6'-tetrahydroxychalcone + 3 CO2 + 4 CoA. It participates in secondary metabolite biosynthesis; flavonoid biosynthesis. The primary product of this enzyme is 4,2',4',6'-tetrahydroxychalcone (also termed naringenin-chalcone or chalcone) which can under specific conditions spontaneously isomerize into naringenin. The chain is Chalcone synthase 4 (CHS4) from Pisum sativum (Garden pea).